A 435-amino-acid polypeptide reads, in one-letter code: Acetyltransferase atnC (435 aa).

3 helical membrane-spanning segments follow: residues 10–30 (AFAN…FLII), 40–60 (YFGI…APTL), and 68–88 (SFLA…LLIL). Residue asparagine 203 is glycosylated (N-linked (GlcNAc...) asparagine). 3 helical membrane-spanning segments follow: residues 306-326 (FLVF…MGLS), 333-353 (IPYF…QAFY), and 370-390 (VVGF…YMFP). N-linked (GlcNAc...) asparagine glycosylation occurs at asparagine 406. Residues 407–427 (LTEVIGMPMMWGLLGTFGMLV) traverse the membrane as a helical segment.

It belongs to the wax synthase family.

Its subcellular location is the membrane. It participates in secondary metabolite biosynthesis; terpenoid biosynthesis. Its function is as follows. Acetyltransferase; part of the gene cluster that mediates the biosynthesis of the meroterpenoids arthripenoids. The pathway begins with the HR-PKS atnH that catalyzes two chain-extension steps to form a reduced triketide, which then primes the SAT domain in the NR-PKS atnG to initiate three more cycles of extension to give a linear hexaketide corresponding to the polyketide part of arthripenoids. The FAD-dependent monooxygenase atnJ then performs an oxidative decarboxylation at C11 of the atnH/atnG product, via an electrophilic aromatic hydroxylation with concomitant ipso-decarboxylation. The membrane-bound polyprenyl transferase atnF then introduces a farnesyl group before the FAD-dependent monooxygenase atnK functions as the first epoxidase on terminal C12'-C13' olefin, followed by a second epoxidation on C7'-C8' catalyzed by atnA. The terpene cyclase/mutase atnI then initiates the sequential tricyclic ring formation through protonation of the terminal epoxide and catalyzes the regioselective and stereoselective 6/6/6-tricyclic ring formation. The cytochrome P450 monooxygenase atnM is responsible for hydroxylating both C1' and C10'. The next steps may involve ketoreduction and acetyl transfer by the ketoreductase atnB and the acetyltransferase atnC, and lead to the production of arthripenoid B, the final biosynthetic product of the atn cluster. The hydroquinone moiety in arthripenoid B is prone to undergo spontaneous oxidation to afford a benzoquinone compound, a key intermediate for generating structure diversity. For instance, addition of a cysteine followed by ring contraction gives arthripenoid A, tautomerization gives the main product arthripenoid C, addition of a molecular of water or amine affords arthripenoid D or E, respectively, and loss of one water forms arthripenoid F. This chain is Acetyltransferase atnC, found in Arthrinium sp.